Here is a 187-residue protein sequence, read N- to C-terminus: MIILGIDEAGRGPLSGPVVAAGVILDQDKIIDGLADSKKLTEKKRQSLYQQIITHAKAYTIVEISPQQIDELNILQATLKAIHQVANNLERQFDKVLVDGNKLPNWDYNSEAIVKGDSKIIEISAASILAKVHRDNICLEHDRLYPQYGFAKHKGYPTKEHLENIKKYGVLDIHRKSYKPVQVLLNE.

The region spanning 1 to 187 (MIILGIDEAG…YKPVQVLLNE (187 aa)) is the RNase H type-2 domain. Residues Asp7, Glu8, and Asp99 each contribute to the a divalent metal cation site.

This sequence belongs to the RNase HII family. Mn(2+) serves as cofactor. It depends on Mg(2+) as a cofactor.

It is found in the cytoplasm. The enzyme catalyses Endonucleolytic cleavage to 5'-phosphomonoester.. Functionally, endonuclease that specifically degrades the RNA of RNA-DNA hybrids. This Francisella tularensis subsp. holarctica (strain FTNF002-00 / FTA) protein is Ribonuclease HII.